A 393-amino-acid polypeptide reads, in one-letter code: tRNA-specific 2-thiouridylase MnmA (393 aa).

Residues 19-26 (AMSGGVDS) and Leu45 contribute to the ATP site. Residue Cys113 is the Nucleophile of the active site. Cys113 and Cys210 are oxidised to a cystine. Gly137 contributes to the ATP binding site. An interaction with tRNA region spans residues 160 to 162 (RDQ). Cys210 (cysteine persulfide intermediate) is an active-site residue.

The protein belongs to the MnmA/TRMU family.

The protein localises to the cytoplasm. The catalysed reaction is S-sulfanyl-L-cysteinyl-[protein] + uridine(34) in tRNA + AH2 + ATP = 2-thiouridine(34) in tRNA + L-cysteinyl-[protein] + A + AMP + diphosphate + H(+). Catalyzes the 2-thiolation of uridine at the wobble position (U34) of tRNA, leading to the formation of s(2)U34. In Bradyrhizobium diazoefficiens (strain JCM 10833 / BCRC 13528 / IAM 13628 / NBRC 14792 / USDA 110), this protein is tRNA-specific 2-thiouridylase MnmA.